The following is a 116-amino-acid chain: Neuropeptide Y receptor type 1 (116 aa).

Residues 1–6 (LVLIAV) form a helical membrane-spanning segment. Topologically, residues 7–24 (ERHQLIINPRGWRPSNRH) are cytoplasmic. A helical transmembrane segment spans residues 25–45 (AYVGIAVIWVLAVASSLPFLI). Residues 46–81 (YQVLTDEPFQNVTLDAFKDKYVCFDKFPSDSHRLSY) lie on the Extracellular side of the membrane. Residue N56 is glycosylated (N-linked (GlcNAc...) asparagine). The chain crosses the membrane as a helical span at residues 82 to 102 (TTLLLVLQYFGPLCFIFICYF). Topologically, residues 103–116 (KIYIRLKRRNNMMD) are cytoplasmic.

The protein belongs to the G-protein coupled receptor 1 family.

The protein resides in the cell membrane. Functionally, receptor for neuropeptide Y and peptide YY. In Ovis aries (Sheep), this protein is Neuropeptide Y receptor type 1 (NPY1R).